A 296-amino-acid chain; its full sequence is Immediate early response gene 5-like protein (296 aa).

The protein belongs to the IER family.

The sequence is that of Immediate early response gene 5-like protein (ier5l) from Xenopus tropicalis (Western clawed frog).